The primary structure comprises 248 residues: 1-(5-phosphoribosyl)-5-[(5-phosphoribosylamino)methylideneamino] imidazole-4-carboxamide isomerase (248 aa).

D8 serves as the catalytic Proton acceptor. The Proton donor role is filled by D129.

This sequence belongs to the HisA/HisF family.

The protein localises to the cytoplasm. It catalyses the reaction 1-(5-phospho-beta-D-ribosyl)-5-[(5-phospho-beta-D-ribosylamino)methylideneamino]imidazole-4-carboxamide = 5-[(5-phospho-1-deoxy-D-ribulos-1-ylimino)methylamino]-1-(5-phospho-beta-D-ribosyl)imidazole-4-carboxamide. It participates in amino-acid biosynthesis; L-histidine biosynthesis; L-histidine from 5-phospho-alpha-D-ribose 1-diphosphate: step 4/9. This is 1-(5-phosphoribosyl)-5-[(5-phosphoribosylamino)methylideneamino] imidazole-4-carboxamide isomerase from Desulfitobacterium hafniense (strain Y51).